The following is a 604-amino-acid chain: Protein CBFA2T2 (604 aa).

Residues 25-105 (KRVPAMPGSP…SSTSSALTNQ (81 aa)) form a disordered region. A Phosphoserine modification is found at S33. Residue K38 forms a Glycyl lysine isopeptide (Lys-Gly) (interchain with G-Cter in SUMO2) linkage. The span at 46 to 59 (PTMPPLPPINPGGP) shows a compositional bias: pro residues. 2 stretches are compositionally biased toward polar residues: residues 64-79 (FTPT…SPPT) and 88-105 (QRFS…LTNQ). The interval 107–215 (LPATCGARQL…QHEHLLLNTS (109 aa)) is interaction with PRDM14. The region spanning 113–208 (ARQLSKLKRF…TPSQYLAQHE (96 aa)) is the TAFH domain. The disordered stretch occupies residues 229–265 (VHGNGKRPSPERREENSFDRDTIAPEPPAKRVCTISP). The span at 236–251 (PSPERREENSFDRDTI) shows a compositional bias: basic and acidic residues. S264 is modified (phosphoserine). The nervy homology region 2 (NHR2) stretch occupies residues 331–377 (QDELVDHRLTEREWADEWKHLDHALNCIMEMVEKTRRSMAVLRRCQE). The tract at residues 397 to 427 (RKTGTELVSRQHSPGSADSLSNDSQREFNSR) is disordered. Polar residues predominate over residues 402–419 (ELVSRQHSPGSADSLSND). S409 bears the Phosphoserine mark. Residues 435–484 (VEFWKKTEEAVNKVKIQAMSEVQKAVAEAEQKAFEVIATERARMEQTIAD) form a nervy homology region 3 (NHR3) region. K449 participates in a covalent cross-link: Glycyl lysine isopeptide (Lys-Gly) (interchain with G-Cter in SUMO2). A coiled-coil region spans residues 451 to 491 (QAMSEVQKAVAEAEQKAFEVIATERARMEQTIADVKRQAAE). Residues C507, C510, C518, C521, C527, C531, H539, and C543 each coordinate Zn(2+). An MYND-type zinc finger spans residues 507–543 (CWNCGRKASETCSGCNIARYCGSFCQHKDWERHHRLC). The disordered stretch occupies residues 547-604 (LHGQSPHGQGRPLLPVGRGSSARSADCSVPSPALDKTSATTSRSSTPASVTAIDTNGL). A Phosphoserine modification is found at S577. Positions 583-598 (TSATTSRSSTPASVTA) are enriched in low complexity.

This sequence belongs to the CBFA2T family. Homooligomer. Homotetramerization is mediated by nervy homology region 2. Can interact with RUNX1T1/CBFA2T1 and CBFA2T3/MTG16; heterotetramerization between members of the CBFA2T family is proposed. Forms a heterooligomer with the AML1-MTG8/ETO fusion protein. Interacts with PRDM14. Interacts with RBPJ, GFI1, TCF4. Interacts with TAL1 and CBFA2T3/MTG16; the heteromer with CBFA2T3/MTG16 may function in repression of TAL1. In terms of tissue distribution, ubiquitously expressed in fetal and adult tissues. Highly expressed in adult brain, heart, lung, kidney, lymph node, appendix, thymus, testis, uterus, small intestine, prostate and thymus.

It is found in the nucleus. Its function is as follows. Transcriptional corepressor which facilitates transcriptional repression via its association with DNA-binding transcription factors and recruitment of other corepressors and histone-modifying enzymes. Via association with PRDM14 is involved in regulation of embryonic stem cell (ESC) pluripotency. Involved in primordial germ cell (PCG) formation. Stabilizes PRDM14 and OCT4 on chromatin in a homooligomerization-dependent manner. Can repress the expression of MMP7 in a ZBTB33-dependent manner. May function as a complex with the chimeric protein RUNX1/AML1-CBFA2T1/MTG8 (AML1-MTG8/ETO fusion protein) which is produced in acute myeloid leukemia with the chromosomal translocation t(8;21). May thus be involved in the repression of AML1-dependent transcription and the induction of G-CSF/CSF3-dependent cell growth. May be a tumor suppressor gene candidate involved in myeloid tumors with the deletion of the 20q11 region. Through heteromerization with CBFA2T3/MTG16 may be involved in regulation of the proliferation and the differentiation of erythroid progenitors by repressing the expression of TAL1 target genes. Required for the maintenance of the secretory cell lineage in the small intestine. Can inhibit Notch signaling probably by association with RBPJ and may be involved in GFI1-mediated Paneth cell differentiation. The sequence is that of Protein CBFA2T2 (CBFA2T2) from Homo sapiens (Human).